The chain runs to 253 residues: Chitooligosaccharide deacetylase (253 aa).

Mg(2+)-binding residues include His-61 and His-126.

The protein belongs to the YdjC deacetylase family. ChbG subfamily. As to quaternary structure, homodimer. It depends on Mg(2+) as a cofactor.

It is found in the cytoplasm. It catalyses the reaction N,N'-diacetylchitobiose + H2O = N-acetyl-beta-D-glucosaminyl-(1-&gt;4)-D-glucosamine + acetate. It carries out the reaction diacetylchitobiose-6'-phosphate + H2O = N'-monoacetylchitobiose-6'-phosphate + acetate. It functions in the pathway glycan degradation; chitin degradation. Its function is as follows. Involved in the degradation of chitin. ChbG is essential for growth on the acetylated chitooligosaccharides chitobiose and chitotriose but is dispensable for growth on cellobiose and chitosan dimer, the deacetylated form of chitobiose. Deacetylation of chitobiose-6-P and chitotriose-6-P is necessary for both the activation of the chb promoter by the regulatory protein ChbR and the hydrolysis of phosphorylated beta-glucosides by the phospho-beta-glucosidase ChbF. Catalyzes the removal of only one acetyl group from chitobiose-6-P to yield monoacetylchitobiose-6-P, the inducer of ChbR and the substrate of ChbF. The chain is Chitooligosaccharide deacetylase from Yersinia pestis bv. Antiqua (strain Angola).